The primary structure comprises 98 residues: NADH-ubiquinone oxidoreductase chain 4L (98 aa).

Helical transmembrane passes span 1–21, 29–49, and 61–81; these read MSLTYMNMFMAFTISLLGLLM, SLLCLEGMMLSLFVMMTMTIL, and IILLVFAACEAALGLSLLVMV.

Belongs to the complex I subunit 4L family. As to quaternary structure, core subunit of respiratory chain NADH dehydrogenase (Complex I) which is composed of 45 different subunits.

The protein resides in the mitochondrion inner membrane. The catalysed reaction is a ubiquinone + NADH + 5 H(+)(in) = a ubiquinol + NAD(+) + 4 H(+)(out). Functionally, core subunit of the mitochondrial membrane respiratory chain NADH dehydrogenase (Complex I) which catalyzes electron transfer from NADH through the respiratory chain, using ubiquinone as an electron acceptor. Part of the enzyme membrane arm which is embedded in the lipid bilayer and involved in proton translocation. This chain is NADH-ubiquinone oxidoreductase chain 4L (MT-ND4L), found in Stenoderma rufum (Red fruit bat).